The sequence spans 291 residues: Prepilin leader peptidase/N-methyltransferase (291 aa).

Residues 14-34 (LYFSLVFLFSLMIGSFLNVVI) traverse the membrane as a helical segment. Zn(2+) is bound by residues Cys75, Cys78, Cys100, and Cys103. The next 6 helical transmembrane spans lie at 107 to 127 (ISAR…VVAM), 131 to 151 (PGWG…LTFI), 162 to 182 (LTLP…YVPL), 186 to 206 (VIGA…FKLL), 232 to 252 (LPIV…GLIL), and 262 to 282 (IPFG…GDSI).

Belongs to the peptidase A24 family. It depends on Zn(2+) as a cofactor.

The protein resides in the cell inner membrane. The enzyme catalyses Typically cleaves a -Gly-|-Phe- bond to release an N-terminal, basic peptide of 5-8 residues from type IV prepilin, and then N-methylates the new N-terminal amino group, the methyl donor being S-adenosyl-L-methionine.. In terms of biological role, plays an essential role in type IV pili and type II pseudopili formation by proteolytically removing the leader sequence from substrate proteins and subsequently monomethylating the alpha-amino group of the newly exposed N-terminal phenylalanine. The protein is Prepilin leader peptidase/N-methyltransferase (tapD) of Aeromonas salmonicida (strain A449).